We begin with the raw amino-acid sequence, 229 residues long: Small ribosomal subunit protein uS2c (229 aa).

Belongs to the universal ribosomal protein uS2 family.

It localises to the plastid. It is found in the chloroplast. This chain is Small ribosomal subunit protein uS2c (rps2), found in Emiliania huxleyi (Coccolithophore).